Consider the following 407-residue polypeptide: MESRVLLRATETVTGVPQLRRPIRAINRQFSTASSSFTAFAKPIGSIGEGGNLISGRQLRPLLLLDSLPEKREILKPVRAASAEGGDSAGETKVGFLGKYPWLVTGILLLMWYFLNVIFNILNKKIYNYFPYPYFVSVIHLFVGVVYCLVSWSVGLPKRAPVNSDILKVLIPVAVCHAIGHVTSNVSFAAVAVSFTHTIKALEPFFNASASQFLLGQPIPITLWLSLAPVVLGVAMASLTELSFNWLGFISAMISNISFTYRSIFSKKAMTDMDSTNVYAYISIIALFVCLPPAIIVEGPQLLKHGFNDAIAKVGMTKFISDLFWVGMFYHLYNQLATNTLERVAPLTHAVGNVLKRVFVIGFSIVIFGNKISTQTGIGTGIAIAGVALYSVIKAKIEEEKRQGKTA.

The transit peptide at 1–79 (MESRVLLRAT…EKREILKPVR (79 aa)) directs the protein to the chloroplast. The Chloroplast intermembrane portion of the chain corresponds to 80–101 (AASAEGGDSAGETKVGFLGKYP). The chain crosses the membrane as a helical span at residues 102-122 (WLVTGILLLMWYFLNVIFNIL). Topologically, residues 123–134 (NKKIYNYFPYPY) are lumenal. Residues 135–155 (FVSVIHLFVGVVYCLVSWSVG) form a helical membrane-spanning segment. Residues 156-212 (LPKRAPVNSDILKVLIPVAVCHAIGHVTSNVSFAAVAVSFTHTIKALEPFFNASASQ) are Chloroplast intermembrane-facing. A helical membrane pass occupies residues 213–233 (FLLGQPIPITLWLSLAPVVLG). The Lumenal segment spans residues 234 to 277 (VAMASLTELSFNWLGFISAMISNISFTYRSIFSKKAMTDMDSTN). A helical transmembrane segment spans residues 278–297 (VYAYISIIALFVCLPPAIIV). At 298–375 (EGPQLLKHGF…VIFGNKISTQ (78 aa)) the chain is on the chloroplast intermembrane side. A helical transmembrane segment spans residues 376 to 396 (TGIGTGIAIAGVALYSVIKAK). Residues 397–407 (IEEEKRQGKTA) lie on the Lumenal side of the membrane.

The protein belongs to the TPT transporter family. TPT (TC 2.A.7.9) subfamily. As to quaternary structure, homodimer.

It localises to the plastid. The protein resides in the chloroplast membrane. Its function is as follows. Mediates the export of fixed carbons from the chloroplasts into the cytosol in the form of triose phosphates. This is Triose phosphate/phosphate translocator, chloroplastic (TPT) from Brassica oleracea var. botrytis (Cauliflower).